The sequence spans 1245 residues: ATP-dependent helicase/deoxyribonuclease subunit B (1245 aa).

Residues 737–758 (WDDQNNAPTTDLPDRPNPRASE) form a disordered region. Basic and acidic residues predominate over residues 748 to 758 (LPDRPNPRASE).

This sequence belongs to the helicase family. AddB/RexB type 2 subfamily. As to quaternary structure, heterodimer of AddA and RexB. Mg(2+) is required as a cofactor.

In terms of biological role, the heterodimer acts as both an ATP-dependent DNA helicase and an ATP-dependent, dual-direction single-stranded exonuclease. Recognizes the chi site generating a DNA molecule suitable for the initiation of homologous recombination. This subunit has 5' -&gt; 3' nuclease activity but not helicase activity. In Limosilactobacillus fermentum (strain NBRC 3956 / LMG 18251) (Lactobacillus fermentum), this protein is ATP-dependent helicase/deoxyribonuclease subunit B.